Here is a 295-residue protein sequence, read N- to C-terminus: Nitrogenase iron protein 1 (295 aa).

Residue 13 to 20 participates in ATP binding; sequence GKGGIGKS. Cys101 contacts [4Fe-4S] cluster. Arg104 carries the post-translational modification ADP-ribosylarginine; by dinitrogenase reductase ADP-ribosyltransferase. [4Fe-4S] cluster is bound at residue Cys135.

It belongs to the NifH/BchL/ChlL family. As to quaternary structure, homodimer. It depends on [4Fe-4S] cluster as a cofactor. Post-translationally, the reversible ADP-ribosylation of Arg-104 inactivates the nitrogenase reductase and regulates nitrogenase activity.

It catalyses the reaction N2 + 8 reduced [2Fe-2S]-[ferredoxin] + 16 ATP + 16 H2O = H2 + 8 oxidized [2Fe-2S]-[ferredoxin] + 2 NH4(+) + 16 ADP + 16 phosphate + 6 H(+). In terms of biological role, the key enzymatic reactions in nitrogen fixation are catalyzed by the nitrogenase complex, which has 2 components: the iron protein and the molybdenum-iron protein. This is Nitrogenase iron protein 1 (nifH1) from Nostoc sp. (strain PCC 7120 / SAG 25.82 / UTEX 2576).